The primary structure comprises 504 residues: D-alanine--D-alanyl carrier protein ligase (504 aa).

Thr-152–Ser-153 is an ATP binding site. Asp-197 contacts D-alanine. Asn-292 to Thr-297 contributes to the ATP binding site. Val-301 lines the D-alanine pocket. ATP contacts are provided by residues Asp-383, Tyr-394–Arg-397, and Lys-492. Position 492 (Lys-492) interacts with D-alanine.

This sequence belongs to the ATP-dependent AMP-binding enzyme family. DltA subfamily.

Its subcellular location is the cytoplasm. It carries out the reaction holo-[D-alanyl-carrier protein] + D-alanine + ATP = D-alanyl-[D-alanyl-carrier protein] + AMP + diphosphate. It participates in cell wall biogenesis; lipoteichoic acid biosynthesis. Functionally, catalyzes the first step in the D-alanylation of lipoteichoic acid (LTA), the activation of D-alanine and its transfer onto the D-alanyl carrier protein (Dcp) DltC. In an ATP-dependent two-step reaction, forms a high energy D-alanyl-AMP intermediate, followed by transfer of the D-alanyl residue as a thiol ester to the phosphopantheinyl prosthetic group of the Dcp. D-alanylation of LTA plays an important role in modulating the properties of the cell wall in Gram-positive bacteria, influencing the net charge of the cell wall. This is D-alanine--D-alanyl carrier protein ligase from Bacillus cereus (strain AH187).